The primary structure comprises 385 residues: Anhydro-N-acetylmuramic acid kinase (385 aa).

An ATP-binding site is contributed by 12 to 19 (GTSLDGID).

Belongs to the anhydro-N-acetylmuramic acid kinase family.

It catalyses the reaction 1,6-anhydro-N-acetyl-beta-muramate + ATP + H2O = N-acetyl-D-muramate 6-phosphate + ADP + H(+). It participates in amino-sugar metabolism; 1,6-anhydro-N-acetylmuramate degradation. The protein operates within cell wall biogenesis; peptidoglycan recycling. In terms of biological role, catalyzes the specific phosphorylation of 1,6-anhydro-N-acetylmuramic acid (anhMurNAc) with the simultaneous cleavage of the 1,6-anhydro ring, generating MurNAc-6-P. Is required for the utilization of anhMurNAc either imported from the medium or derived from its own cell wall murein, and thus plays a role in cell wall recycling. The chain is Anhydro-N-acetylmuramic acid kinase from Bacillus thuringiensis (strain Al Hakam).